A 528-amino-acid chain; its full sequence is MLLPLLLLLPMCWAVEVKRPRGVSLTNHHFYDESKPFTCLDGSATIPFDQVNDDYCDCKDGSDEPGTAACPNGSFHCTNTGYKPLYIPSNRVNDGVCDCCDGTDEYNSGVICENTCKEKGRKERESLQQMAEVTREGFRLKKILIEDWKKAREEKQKKLIELQAGKKSLEDQVEMLRTVKEEAEKPEREAKEQHQKLWEEQLAAAKAQQEQELAADAFKELDDDMDGTVSVTELQTHPELDTDGDGALSEAEAQALLSGDTQTDATSFYDRVWAAIRDKYRSEALPTDLPAPSAPDLTEPKEEQPPVPSSPTEEEEEEEEEEEEEAEEEEEEEDSEEAPPPLSPPQPASPAEEDKMPPYDEQTQAFIDAAQEARNKFEEAERSLKDMEESIRNLEQEISFDFGPNGEFAYLYSQCYELTTNEYVYRLCPFKLVSQKPKLGGSPTSLGTWGSWIGPDHDKFSAMKYEQGTGCWQGPNRSTTVRLLCGKETMVTSTTEPSRCEYLMELMTPAACPEPPPEAPTEDDHDEL.

The signal sequence occupies residues 1-14; sequence MLLPLLLLLPMCWA. The residue at position 24 (S24) is a Phosphoserine; by FAM20C. 2 LDL-receptor class A domains span residues 37–71 and 72–113; these read FTCL…AACP and NGSF…VICE. 2 disulfide bridges follow: C39–C58 and C56–C70. D49 serves as a coordination point for substrate. Ca(2+)-binding residues include Q50, D53, Y55, D57, D63, and E64. D53 lines the substrate pocket. An N-linked (GlcNAc...) asparagine glycan is attached at N72. 3 disulfides stabilise this stretch: C77–C99, C97–C112, and C100–C116. The residue at position 89 (S89) is a Phosphoserine; by PKC. Residues R91, D94, V96, D98, D104, and E105 each coordinate Ca(2+). K166 bears the N6-succinyllysine mark. Phosphoserine; by FAM20C is present on S168. 2 EF-hand domains span residues 209–244 and 245–290; these read QEQE…DTDG and DGAL…TDLP. Ca(2+) contacts are provided by D222, D224, D226, T228, and E233. 2 disordered regions span residues 234 to 266 and 281 to 357; these read LQTH…TDAT and RSEA…DKMP. The segment covering 247–258 has biased composition (low complexity); that stretch reads ALSEAEAQALLS. Residues 312–337 show a composition bias toward acidic residues; the sequence is TEEEEEEEEEEEEEAEEEEEEEDSEE. Over residues 338–348 the composition is skewed to pro residues; that stretch reads APPPLSPPQPA. Phosphoserine; by PKC is present on residues S383 and S390. Residues 413–514 form the MRH domain; sequence SQCYELTTNE…ELMTPAACPE (102 aa). C415 and C428 are disulfide-bonded. Phosphoserine; by PKC is present on S434. 2 disulfide bridges follow: C471–C500 and C485–C512. N476 carries an N-linked (GlcNAc...) asparagine glycan. The Prevents secretion from ER signature appears at 525–528; it reads HDEL.

Heterodimer of a catalytic alpha subunit (GANAB) and a beta subunit (PRKCSH). Binds glycosylated PTPRC.

Its subcellular location is the endoplasmic reticulum. The protein operates within glycan metabolism; N-glycan metabolism. Its function is as follows. Regulatory subunit of glucosidase II that cleaves sequentially the 2 innermost alpha-1,3-linked glucose residues from the Glc(2)Man(9)GlcNAc(2) oligosaccharide precursor of immature glycoproteins. Required for efficient PKD1/Polycystin-1 biogenesis and trafficking to the plasma membrane of the primary cilia. This chain is Glucosidase 2 subunit beta, found in Homo sapiens (Human).